Reading from the N-terminus, the 380-residue chain is Cytochrome b (380 aa).

A run of 4 helical transmembrane segments spans residues 34–54, 78–99, 114–134, and 179–199; these read FGSL…FLAM, WLIR…YLHI, WNIG…GYVL, and FFTF…VHLL. Heme b is bound by residues histidine 84 and histidine 98. Heme b contacts are provided by histidine 183 and histidine 197. An a ubiquinone-binding site is contributed by histidine 202. A run of 4 helical transmembrane segments spans residues 227–247, 289–309, 321–341, and 348–368; these read YKDL…ALFT, LGGV…PILH, ISQL…WIGG, and FITI…ILFP.

This sequence belongs to the cytochrome b family. In terms of assembly, the cytochrome bc1 complex contains 3 respiratory subunits (MT-CYB, CYC1 and UQCRFS1), 2 core proteins (UQCRC1 and UQCRC2) and probably 6 low-molecular weight proteins. Requires heme b as cofactor.

The protein localises to the mitochondrion inner membrane. Functionally, component of the ubiquinol-cytochrome c reductase complex (complex III or cytochrome b-c1 complex) that is part of the mitochondrial respiratory chain. The b-c1 complex mediates electron transfer from ubiquinol to cytochrome c. Contributes to the generation of a proton gradient across the mitochondrial membrane that is then used for ATP synthesis. The protein is Cytochrome b (mt-cyb) of Pastinachus sephen (Cowtail stingray).